Here is a 280-residue protein sequence, read N- to C-terminus: Cycloeucalenol cycloisomerase (280 aa).

6 helical membrane-spanning segments follow: residues 22 to 42, 53 to 73, 89 to 109, 167 to 187, 201 to 221, and 244 to 264; these read LFFL…VVPY, YLLL…LLVG, ANLW…HYFF, FEAA…TIAI, MYRV…PMFF, and AMLV…IVPL.

It is found in the membrane. The catalysed reaction is cycloeucalenol = obtusifoliol. In terms of biological role, converts pentacyclic cyclopropyl sterols to tetracyclic sterols. The protein is Cycloeucalenol cycloisomerase (CPI1) of Arabidopsis thaliana (Mouse-ear cress).